Reading from the N-terminus, the 155-residue chain is Deoxyuridine 5'-triphosphate nucleotidohydrolase (155 aa).

Substrate is bound by residues 74–76 (RSG), asparagine 87, and 91–93 (LID).

The protein belongs to the dUTPase family. Requires Mg(2+) as cofactor.

It catalyses the reaction dUTP + H2O = dUMP + diphosphate + H(+). Its pathway is pyrimidine metabolism; dUMP biosynthesis; dUMP from dCTP (dUTP route): step 2/2. In terms of biological role, this enzyme is involved in nucleotide metabolism: it produces dUMP, the immediate precursor of thymidine nucleotides and it decreases the intracellular concentration of dUTP so that uracil cannot be incorporated into DNA. In Xylella fastidiosa (strain M12), this protein is Deoxyuridine 5'-triphosphate nucleotidohydrolase.